Consider the following 415-residue polypeptide: Imidazolonepropionase (415 aa).

Positions 76 and 78 each coordinate Fe(3+). Residues His76 and His78 each coordinate Zn(2+). 4-imidazolone-5-propanoate contacts are provided by Arg85, Tyr148, and His181. Residue Tyr148 coordinates N-formimidoyl-L-glutamate. His246 contributes to the Fe(3+) binding site. His246 is a Zn(2+) binding site. Glu249 contributes to the 4-imidazolone-5-propanoate binding site. Residue Asp320 participates in Fe(3+) binding. Asp320 is a Zn(2+) binding site. N-formimidoyl-L-glutamate is bound by residues Asn322 and Gly324. Position 325 (Thr325) interacts with 4-imidazolone-5-propanoate.

The protein belongs to the metallo-dependent hydrolases superfamily. HutI family. Zn(2+) serves as cofactor. Fe(3+) is required as a cofactor.

The protein resides in the cytoplasm. It catalyses the reaction 4-imidazolone-5-propanoate + H2O = N-formimidoyl-L-glutamate. The protein operates within amino-acid degradation; L-histidine degradation into L-glutamate; N-formimidoyl-L-glutamate from L-histidine: step 3/3. Its function is as follows. Catalyzes the hydrolytic cleavage of the carbon-nitrogen bond in imidazolone-5-propanoate to yield N-formimidoyl-L-glutamate. It is the third step in the universal histidine degradation pathway. The sequence is that of Imidazolonepropionase from Thermoanaerobacter pseudethanolicus (strain ATCC 33223 / 39E) (Clostridium thermohydrosulfuricum).